A 1169-amino-acid chain; its full sequence is Polyamine-transporting ATPase 13A2 (1169 aa).

Topologically, residues Met-1 to Pro-44 are cytoplasmic. The stretch at Trp-45–Phe-65 is an intramembrane region. Over Arg-66–Gln-225 the chain is Cytoplasmic. Residues Leu-226–Trp-246 form a helical membrane-spanning segment. At Leu-247–His-250 the chain is on the lumenal side. Residues Tyr-251–Tyr-271 form a helical membrane-spanning segment. Over Lys-272–Lys-422 the chain is Cytoplasmic. Residues Phe-423–Tyr-443 form a helical membrane-spanning segment. Over Arg-444 to Asp-458 the chain is Lumenal. A helical membrane pass occupies residues Leu-459 to Ala-479. The Cytoplasmic segment spans residues Gln-480 to Ser-919. Residue Asp-508 is the 4-aspartylphosphate intermediate of the active site. Mg(2+) contacts are provided by Asp-867 and Asp-871. The helical transmembrane segment at Phe-920–Leu-940 threads the bilayer. Topologically, residues Tyr-941–Asn-946 are lumenal. The chain crosses the membrane as a helical span at residues Leu-947 to Met-967. Over Ser-968–Ser-993 the chain is Cytoplasmic. A helical membrane pass occupies residues Leu-994 to Ala-1014. At Gln-1015–Thr-1037 the chain is on the lumenal side. The N-linked (GlcNAc...) asparagine glycan is linked to Asn-1022. Residues Val-1038–Ala-1058 form a helical membrane-spanning segment. The Cytoplasmic portion of the chain corresponds to Pro-1059–Pro-1069. Residues Phe-1070–Leu-1090 traverse the membrane as a helical segment. Residues Leu-1091 to Lys-1106 are Lumenal-facing. A helical membrane pass occupies residues Leu-1107 to Leu-1127. At Asp-1128–Arg-1169 the chain is on the cytoplasmic side.

This sequence belongs to the cation transport ATPase (P-type) (TC 3.A.3) family. Type V subfamily. In terms of assembly, interacts with MYCBP2; the interaction inhibits the ubiquitination of TSC2 by MYCBP2. Interacts with HDAC6; the interaction results in recruitment of HDAC6 to lysosomes to promote CTTN deacetylation. Autophosphorylated. Accumulates in an inactive autophosphorylated state and autophosphorylation is stimulated by phosphatidic acid and phosphatidylinositol 3,5-bisphosphate but not by Mn(2+) or Zn(2+). The presence of spermine results in a dose-dependent reduction in autophosphorylation.

Its subcellular location is the lysosome membrane. The protein resides in the late endosome membrane. It is found in the endosome. It localises to the multivesicular body membrane. The protein localises to the cytoplasmic vesicle. Its subcellular location is the autophagosome membrane. The catalysed reaction is spermidine(out) + ATP + H2O = spermidine(in) + ADP + phosphate + H(+). It carries out the reaction spermine(out) + ATP + H2O = spermine(in) + ADP + phosphate + H(+). Accumulates in an inactive autophosphorylated state. The presence of spermine results in a dose-dependent reduction in autophosphorylation. Functionally, ATPase which acts as a lysosomal polyamine exporter with high affinity for spermine. Also stimulates cellular uptake of polyamines and protects against polyamine toxicity. Plays a role in intracellular cation homeostasis and the maintenance of neuronal integrity. Contributes to cellular zinc homeostasis. Confers cellular protection against Mn(2+) and Zn(2+) toxicity and mitochondrial stress. Required for proper lysosomal and mitochondrial maintenance. Regulates the autophagy-lysosome pathway through the control of SYT11 expression at both transcriptional and post-translational levels. Facilitates recruitment of deacetylase HDAC6 to lysosomes to deacetylate CTTN, leading to actin polymerization, promotion of autophagosome-lysosome fusion and completion of autophagy. Promotes secretion of exosomes as well as secretion of SCNA via exosomes. Plays a role in lipid homeostasis. This chain is Polyamine-transporting ATPase 13A2, found in Mus musculus (Mouse).